The chain runs to 148 residues: Snaclec stejaggregin-A subunit beta-3 (148 aa).

An N-terminal signal peptide occupies residues 1 to 23; sequence MGRFISVSFGLLVVFLSLSGAGA. Cysteines 27 and 38 form a disulfide. A C-type lectin domain is found at 34–145; it reads YDLYCYKVFK…CSRTHYVVCK (112 aa). Asparagine 47 and asparagine 78 each carry an N-linked (GlcNAc...) asparagine glycan. Intrachain disulfides connect cysteine 55/cysteine 144 and cysteine 121/cysteine 136.

Belongs to the snaclec family. In terms of assembly, heteromultimer; disulfide-linked. Expressed by the venom gland.

It localises to the secreted. In terms of biological role, interferes with one step of hemostasis (modulation of platelet aggregation, or coagulation cascade, for example). The chain is Snaclec stejaggregin-A subunit beta-3 from Trimeresurus stejnegeri (Chinese green tree viper).